The sequence spans 1027 residues: Sodium/potassium-transporting ATPase subunit alpha-1 (1027 aa).

The propeptide occupies M1 to D5. Basic and acidic residues predominate over residues M1 to Y10. The interval M1 to K39 is disordered. Topologically, residues G6–P90 are cytoplasmic. Residue S16 is modified to Phosphoserine; by PKC. Positions E29–K39 are enriched in basic and acidic residues. The interval P85 to P87 is interaction with phosphoinositide-3 kinase. A helical transmembrane segment spans residues E91–A111. The Extracellular segment spans residues V112–Y134. A helical transmembrane segment spans residues L135 to A155. The Cytoplasmic segment spans residues K156–I291. The segment at D217–N238 is disordered. Residues E292 to L311 form a helical membrane-spanning segment. Residues L312–A323 lie on the Extracellular side of the membrane. A helical transmembrane segment spans residues V324–A341. The Cytoplasmic portion of the chain corresponds to T342–L776. D379 functions as the 4-aspartylphosphate intermediate in the catalytic mechanism. K490 contacts ATP. Mg(2+)-binding residues include D721 and D725. The helical transmembrane segment at K777 to F796 threads the bilayer. The Extracellular segment spans residues F797–L806. The helical transmembrane segment at G807–A827 threads the bilayer. The Cytoplasmic portion of the chain corresponds to Y828–K847. The helical transmembrane segment at L848–F870 threads the bilayer. The Extracellular portion of the chain corresponds to F871 to C922. The helical transmembrane segment at H923–K942 threads the bilayer. At T943 to N955 the chain is on the cytoplasmic side. A Phosphoserine; by PKA modification is found at S947. A helical transmembrane segment spans residues K956–Y974. Residues C975 to P989 are Extracellular-facing. The chain crosses the membrane as a helical span at residues N990 to K1010. At L1011–Y1027 the chain is on the cytoplasmic side.

This sequence belongs to the cation transport ATPase (P-type) (TC 3.A.3) family. Type IIC subfamily. As to quaternary structure, the sodium/potassium-transporting ATPase is composed of a catalytic alpha subunit, an auxiliary non-catalytic beta subunit and an additional regulatory subunit.

The protein localises to the cell membrane. The protein resides in the sarcolemma. The enzyme catalyses K(+)(out) + Na(+)(in) + ATP + H2O = K(+)(in) + Na(+)(out) + ADP + phosphate + H(+). This is the catalytic component of the active enzyme, which catalyzes the hydrolysis of ATP coupled with the exchange of sodium and potassium ions across the plasma membrane. This action creates the electrochemical gradient of sodium and potassium ions, providing the energy for active transport of various nutrients. This Catostomus commersonii (White sucker) protein is Sodium/potassium-transporting ATPase subunit alpha-1 (atp1a1).